The chain runs to 351 residues: Histidine protein kinase SaeS (351 aa).

2 consecutive transmembrane segments (helical) span residues 9–29 (IIIGVVSSILLTSTILAIAYI) and 40–60 (TLTLTTIITSCLTLLICSIFI). The HAMP domain maps to 61 to 114 (NPLIQKIKQFNIKTKQFANGNYASNDKTFNSPKEIYELNQSFNKMASEITQQMN). In terms of domain architecture, Histidine kinase spans 129–348 (NLAHDLKTPL…TMTVTLHKLD (220 aa)). At histidine 132 the chain carries Phosphohistidine; by autocatalysis.

In terms of processing, autophosphorylated.

It is found in the cell membrane. It catalyses the reaction ATP + protein L-histidine = ADP + protein N-phospho-L-histidine.. Member of the two-component regulatory system SaeR/SaeS involved in the regulation of staphylococcal virulence factors in a strain-dependent fashion. Probably functions as a membrane-associated protein kinase that upon sensing the appropriate signal, autophosphorylates and in turn activates the cytosolic response regulator SaeR. The sequence is that of Histidine protein kinase SaeS (saeS) from Staphylococcus aureus (strain MRSA252).